A 76-amino-acid polypeptide reads, in one-letter code: Protein CASC2, isoforms 1/2 (76 aa).

The interval 1–20 (MAGTRGLMLLGPGPVAGPRD) is disordered.

This Homo sapiens (Human) protein is Protein CASC2, isoforms 1/2 (CASC2).